The sequence spans 148 residues: SsrA-binding protein (148 aa).

A disordered region spans residues 123 to 148 (KLHDKRETEKKRDWEREKARIMRSAT). Over residues 126-142 (DKRETEKKRDWEREKAR) the composition is skewed to basic and acidic residues.

Belongs to the SmpB family.

It is found in the cytoplasm. Required for rescue of stalled ribosomes mediated by trans-translation. Binds to transfer-messenger RNA (tmRNA), required for stable association of tmRNA with ribosomes. tmRNA and SmpB together mimic tRNA shape, replacing the anticodon stem-loop with SmpB. tmRNA is encoded by the ssrA gene; the 2 termini fold to resemble tRNA(Ala) and it encodes a 'tag peptide', a short internal open reading frame. During trans-translation Ala-aminoacylated tmRNA acts like a tRNA, entering the A-site of stalled ribosomes, displacing the stalled mRNA. The ribosome then switches to translate the ORF on the tmRNA; the nascent peptide is terminated with the 'tag peptide' encoded by the tmRNA and targeted for degradation. The ribosome is freed to recommence translation, which seems to be the essential function of trans-translation. The polypeptide is SsrA-binding protein (Burkholderia pseudomallei (strain 1710b)).